A 239-amino-acid chain; its full sequence is DNA repair protein RecO (239 aa).

Belongs to the RecO family.

Its function is as follows. Involved in DNA repair and RecF pathway recombination. This Bifidobacterium longum subsp. infantis (strain ATCC 15697 / DSM 20088 / JCM 1222 / NCTC 11817 / S12) protein is DNA repair protein RecO.